Consider the following 174-residue polypeptide: uncharacterized protein (174 aa).

This is an uncharacterized protein from Caenorhabditis elegans.